The sequence spans 952 residues: Substrate-adhesion molecule (952 aa).

The N-terminal stretch at 1–25 (MKSQKIGSMILLIGILLAIFNFAYS) is a signal peptide. Over 26–527 (DDDIERFSIN…TWFFDTNVET (502 aa)) the chain is Extracellular. N-linked (GlcNAc...) asparagine glycosylation is found at Asn-78, Asn-182, Asn-231, Asn-243, and Asn-412. The 34-residue stretch at 438–471 (EIRRCKDSCNGYGTCNTANYTCVCDSAHMGETCN) folds into the EGF-like domain. Cystine bridges form between Cys-442/Cys-452, Cys-446/Cys-459, and Cys-461/Cys-470. Asn-456 carries an N-linked (GlcNAc...) asparagine glycan. Residues 528 to 548 (GVIALACIFIAFVGILYIIDI) form a helical membrane-spanning segment. Residues 549–591 (GTTVPIDIKRAKDYAEENKSGQFPKATHEEASVLWWRDQRSHK) are Cytoplasmic-facing. The helical transmembrane segment at 592-612 (AWTFMDQFQLISLVSHIGVVF) threads the bilayer. The Extracellular segment spans residues 613–678 (PSRFISFTEY…GDLYLLPNIL (66 aa)). Residues 679–699 (FWFGLLLGVFLVPLLLAYAII) form a helical membrane-spanning segment. At 700-722 (SFMESLIHWKEVVTNRLIHVLVR) the chain is on the cytoplasmic side. Residues 723 to 743 (ILTFGYIGVLIAASFAMVTPL) traverse the membrane as a helical segment. Residues 744-752 (HDYRIIIPG) lie on the Extracellular side of the membrane. A helical membrane pass occupies residues 753 to 773 (AIIFVLYGIGLPIAIWFLLAV). At 774–801 (PEARLHNPTFKQRFGCLYVHYKPKTDHR) the chain is on the cytoplasmic side. A helical transmembrane segment spans residues 802-822 (FVVFMFIKRFIMAVIIGILSF). Topologically, residues 823–837 (KPMTNYPLTGTDLAV) are extracellular. A helical transmembrane segment spans residues 838–858 (PIVQVVVIDIALIGYAVLLFI). The Cytoplasmic segment spans residues 859–868 (RKPYFDHYQL). The chain crosses the membrane as a helical span at residues 869–889 (WLEYLLTAINIVTVSLSLTHI). At 890 to 897 (KSPSAAGE) the chain is on the extracellular side. A helical transmembrane segment spans residues 898–918 (LIACLIQALALVACIAAYVVA). The Cytoplasmic portion of the chain corresponds to 919 to 952 (WLQMRSSFIKKVKKYLCCCCKSSKSSGEIDLSKK).

It is found in the cell membrane. Functionally, involved in substrate adhesion, myosin-independent cytokinesis, organization of actin cytoskeleton, and phagocytosis. This is Substrate-adhesion molecule (sadA) from Dictyostelium discoideum (Social amoeba).